A 292-amino-acid polypeptide reads, in one-letter code: Small ribosomal subunit protein uS3 (292 aa).

The KH type-2 domain maps to 39–110 (IRLEIMKFLK…KISIKIKEVK (72 aa)). The tract at residues 247 to 268 (KANERQSRAALNKKDGLSKDET) is disordered.

It belongs to the universal ribosomal protein uS3 family. In terms of assembly, part of the 30S ribosomal subunit. Forms a tight complex with proteins S10 and S14.

Its function is as follows. Binds the lower part of the 30S subunit head. Binds mRNA in the 70S ribosome, positioning it for translation. This is Small ribosomal subunit protein uS3 from Borrelia garinii subsp. bavariensis (strain ATCC BAA-2496 / DSM 23469 / PBi) (Borreliella bavariensis).